Consider the following 79-residue polypeptide: Conotoxin Kt6.1 (79 aa).

An N-terminal signal peptide occupies residues 1–22; it reads MKLTCVLIISVLFLTASQLITA. Positions 23 to 47 are excised as a propeptide; the sequence is VYSRDKQQYRAARLRDEMRNLKGAR. Intrachain disulfides connect cysteine 49-cysteine 62, cysteine 56-cysteine 67, and cysteine 61-cysteine 77. 4-hydroxyproline is present on residues proline 60 and proline 63.

The protein belongs to the conotoxin O1 superfamily. In terms of tissue distribution, expressed by the venom duct.

It localises to the secreted. Ion channel inhibitor that inhibits the increase in intracellular calcium upon depolarization in DRG neurons. In vivo, both intraperitoneal and intracranial injections into mice induce hyperactivity. The protein is Conotoxin Kt6.1 of Conus kintoki (Cone snail).